A 494-amino-acid chain; its full sequence is 4-trimethylaminobutyraldehyde dehydrogenase (494 aa).

At Ser2 the chain carries N-acetylserine. Lys30 is modified (N6-acetyllysine; alternate). Residue Lys30 is modified to N6-succinyllysine; alternate. Lys59 carries the post-translational modification N6-succinyllysine. NAD(+) contacts are provided by residues Lys180 and 232–236; that span reads GSVPT. The active-site Proton acceptor is the Glu254. Catalysis depends on Cys288, which acts as the Nucleophile. N6-acetyllysine is present on Lys298. Lys303 bears the N6-acetyllysine; alternate mark. Residue Lys303 is modified to N6-succinyllysine; alternate. Lys344 carries the post-translational modification N6-acetyllysine. Glu391 contributes to the NAD(+) binding site.

It belongs to the aldehyde dehydrogenase family. As to quaternary structure, homotetramer.

Its subcellular location is the cytoplasm. The protein localises to the cytosol. It carries out the reaction 4-(trimethylamino)butanal + NAD(+) + H2O = 4-(trimethylamino)butanoate + NADH + 2 H(+). The enzyme catalyses an aldehyde + NAD(+) + H2O = a carboxylate + NADH + 2 H(+). The catalysed reaction is 4-aminobutanal + NAD(+) + H2O = 4-aminobutanoate + NADH + 2 H(+). It catalyses the reaction formaldehyde + NAD(+) + H2O = formate + NADH + 2 H(+). It carries out the reaction acetaldehyde + NAD(+) + H2O = acetate + NADH + 2 H(+). The enzyme catalyses imidazole-4-acetaldehyde + NAD(+) + H2O = imidazole-4-acetate + NADH + 2 H(+). The catalysed reaction is acrolein + NAD(+) + H2O = acrylate + NADH + 2 H(+). It catalyses the reaction (5-hydroxyindol-3-yl)acetaldehyde + NAD(+) + H2O = (5-hydroxyindol-3-yl)acetate + NADH + 2 H(+). It carries out the reaction 3,4-dihydroxyphenylacetaldehyde + NAD(+) + H2O = 3,4-dihydroxyphenylacetate + NADH + 2 H(+). The enzyme catalyses spermine monoaldehyde + NAD(+) + H2O = N-(2-carboxyethyl)spermidine + NADH + 2 H(+). The catalysed reaction is propanal + NAD(+) + H2O = propanoate + NADH + 2 H(+). It catalyses the reaction butanal + NAD(+) + H2O = butanoate + NADH + 2 H(+). It carries out the reaction pentanal + NAD(+) + H2O = pentanoate + NADH + 2 H(+). The enzyme catalyses hexanal + NAD(+) + H2O = hexanoate + NADH + 2 H(+). The protein operates within amine and polyamine biosynthesis; carnitine biosynthesis. Functionally, converts gamma-trimethylaminobutyraldehyde into gamma-butyrobetaine with high efficiency (in vitro). Can catalyze the irreversible oxidation of a broad range of aldehydes to the corresponding acids in an NAD-dependent reaction, but with low efficiency. Catalyzes the oxidation of aldehydes arising from biogenic amines and polyamines. The protein is 4-trimethylaminobutyraldehyde dehydrogenase (ALDH9A1) of Sus scrofa (Pig).